A 443-amino-acid chain; its full sequence is 3-phosphoshikimate 1-carboxyvinyltransferase (443 aa).

3-phosphoshikimate-binding residues include K24, S25, and R29. Residue K24 participates in phosphoenolpyruvate binding. Residues G96 and R124 each coordinate phosphoenolpyruvate. 4 residues coordinate 3-phosphoshikimate: S168, Q170, D316, and K343. Q170 lines the phosphoenolpyruvate pocket. The Proton acceptor role is filled by D316. Phosphoenolpyruvate is bound by residues R347 and R391.

Belongs to the EPSP synthase family. Monomer.

The protein resides in the cytoplasm. The enzyme catalyses 3-phosphoshikimate + phosphoenolpyruvate = 5-O-(1-carboxyvinyl)-3-phosphoshikimate + phosphate. Its pathway is metabolic intermediate biosynthesis; chorismate biosynthesis; chorismate from D-erythrose 4-phosphate and phosphoenolpyruvate: step 6/7. In terms of biological role, catalyzes the transfer of the enolpyruvyl moiety of phosphoenolpyruvate (PEP) to the 5-hydroxyl of shikimate-3-phosphate (S3P) to produce enolpyruvyl shikimate-3-phosphate and inorganic phosphate. The polypeptide is 3-phosphoshikimate 1-carboxyvinyltransferase (Dichelobacter nodosus (Bacteroides nodosus)).